Reading from the N-terminus, the 760-residue chain is Anti-sigma-I factor RsgI6 (760 aa).

Residues 1-55 (MIVGKVLDMDEKTAIIMTDDFAFLNVVRTSEMAVGKKVKVLDSDIIKPKNSLRRY) lie on the Cytoplasmic side of the membrane. In terms of domain architecture, RsgI N-terminal anti-sigma spans 2–49 (IVGKVLDMDEKTAIIMTDDFAFLNVVRTSEMAVGKKVKVLDSDIIKPK). Residues 56-76 (LPVAAVAACFVIVLSFVLMFI) traverse the membrane as a helical segment. The Extracellular segment spans residues 77 to 760 (NGNTARKNIY…GTLQTTYRIP (684 aa)). Positions 274 to 352 (AINTGPAESA…STPKPVSPVQ (79 aa)) are disordered. Positions 291-352 (LPATSTPGRT…STPKPVSPVQ (62 aa)) are enriched in polar residues. A GH10 domain is found at 402 to 701 (DSSNKPIENA…NEAGRRFESL (300 aa)). Residue Glu538 is the Proton donor of the active site. The active-site Nucleophile is the Glu635.

It in the C-terminal section; belongs to the glycosyl hydrolase 10 (cellulase F) family. Interacts (via RsgI N-terminal anti-sigma domain) with SigI6.

Its subcellular location is the cell membrane. The catalysed reaction is Endohydrolysis of (1-&gt;4)-beta-D-xylosidic linkages in xylans.. The protein operates within glycan degradation; xylan degradation. Functionally, anti-sigma factor for SigI6. Negatively regulates SigI6 activity through direct interaction. Binding of the polysaccharide substrate to the extracellular C-terminal sensing domain of RsgI6 may induce a conformational change in its N-terminal cytoplasmic region, leading to the release and activation of SigI6. Binds to and hydrolyzes insoluble and soluble xylan substrates. Has low enzymatic activity. This Acetivibrio thermocellus (strain ATCC 27405 / DSM 1237 / JCM 9322 / NBRC 103400 / NCIMB 10682 / NRRL B-4536 / VPI 7372) (Clostridium thermocellum) protein is Anti-sigma-I factor RsgI6.